Consider the following 21-residue polypeptide: Short neurotoxin E1 (21 aa).

A disordered region spans residues 1–21 (MICYNHQSSEPPTTXTCSEGQ).

Contains 4 disulfide bonds. As to expression, expressed by the venom gland.

It is found in the secreted. Its function is as follows. Binds to muscle nicotinic acetylcholine receptor (nAChR) and inhibit acetylcholine from binding to the receptor, thereby impairing neuromuscular transmission. The polypeptide is Short neurotoxin E1 (Micrurus pyrrhocryptus (Coral snake)).